A 481-amino-acid polypeptide reads, in one-letter code: Drebrin-like protein (481 aa).

The 129-residue stretch at 3-131 folds into the ADF-H domain; it reads SLDISDPDIT…DEKAITAALN (129 aa). The span at 217–227 shows a compositional bias: basic and acidic residues; the sequence is YWKQQQAEKQK. A disordered region spans residues 217 to 423; that stretch reads YWKQQQAEKQ…PAEEQYDQSG (207 aa). Residues 228–237 show a composition bias toward low complexity; sequence QQQQQQQQQA. Residues 248–261 are compositionally biased toward polar residues; sequence TVGNKFQEQVSKPT. The segment covering 291–300 has biased composition (pro residues); the sequence is PPAPSRPAAP. Residues 325–335 show a composition bias toward acidic residues; that stretch reads QYEEPQYEEEQ. The segment covering 336–413 has biased composition (low complexity); it reads QQQYEEQPTE…YQEEQQQYEQ (78 aa). An SH3 domain is found at 422 to 481; the sequence is SGYLQAKALYDYNGENDGDLSFREGDIITILDQSDPDGWWQGSLPTGEQGFFPSNFVQQL.

It belongs to the ABP1 family.

The protein localises to the cytoplasm. It localises to the cytoskeleton. It is found in the cell projection. The protein resides in the pseudopodium. In terms of biological role, actin-binding adapter protein. Binds to F-actin but is not involved in actin polymerization, capping or bundling. Does not bind G-actin. Controls pseudopodium number and motility in early stages of chemotactic aggregation. The sequence is that of Drebrin-like protein (abpE-1) from Dictyostelium discoideum (Social amoeba).